A 2168-amino-acid polypeptide reads, in one-letter code: Bromodomain adjacent to zinc finger domain protein 2B (2168 aa).

8 disordered regions span residues methionine 1–valine 29, phenylalanine 140–glutamine 348, leucine 409–arginine 428, serine 459–histidine 479, serine 528–alanine 698, glycine 719–threonine 740, methionine 841–valine 872, and arginine 1021–glutamate 1043. The span at proline 8–valine 29 shows a compositional bias: low complexity. 2 stretches are compositionally biased toward polar residues: residues asparagine 146–asparagine 163 and glycine 171–alanine 193. Low complexity-rich tracts occupy residues serine 194–serine 204 and glutamate 240–serine 263. Over residues aspartate 264–serine 291 the composition is skewed to acidic residues. Residues serine 307–isoleucine 325 are compositionally biased toward basic and acidic residues. Low complexity predominate over residues serine 335–glutamine 348. 2 stretches are compositionally biased toward polar residues: residues proline 461–histidine 479 and serine 528–valine 551. Residues arginine 592–glutamate 605 are compositionally biased toward basic and acidic residues. The span at aspartate 606–threonine 663 shows a compositional bias: acidic residues. Polar residues predominate over residues methionine 670 to arginine 693. Low complexity predominate over residues threonine 720–glycine 732. The region spanning valine 739–arginine 810 is the MBD domain. The span at methionine 841–arginine 861 shows a compositional bias: basic and acidic residues. A coiled-coil region spans residues alanine 883–lysine 1061. Positions glycine 1087 to leucine 1152 constitute a DDT domain. The segment at lysine 1265 to alanine 1341 is disordered. Residues serine 1297–lysine 1321 are compositionally biased toward acidic residues. Basic and acidic residues predominate over residues glutamate 1322–isoleucine 1331. Positions aspartate 1334–valine 1375 form a coiled coil. Lysine 1425 is covalently cross-linked (Glycyl lysine isopeptide (Lys-Gly) (interchain with G-Cter in SUMO2)). N6-acetyllysine is present on lysine 1462. 2 positions are modified to phosphoserine: serine 1465 and serine 1467. Positions serine 1503–serine 1533 are enriched in polar residues. Disordered regions lie at residues serine 1503–proline 1542, serine 1582–glutamine 1607, and threonine 1670–alanine 1694. Residues serine 1588 to alanine 1600 show a composition bias toward pro residues. Residues threonine 1670–glutamine 1692 are compositionally biased toward polar residues. Serine 1680 carries the post-translational modification Phosphoserine. The PHD-type zinc finger occupies lysine 1931–lysine 1981. The interval lysine 1998–glutamate 2040 is disordered. Residue threonine 2014 is modified to Phosphothreonine. Phosphoserine is present on serine 2019. Over residues glycine 2029–glutamate 2040 the composition is skewed to basic and acidic residues. Positions arginine 2060 to threonine 2164 constitute a Bromo domain.

It belongs to the WAL family. Component of the BRF-1 ISWI chromatin remodeling complex, at least composed of SMARCA1 and BAZ2B, which regulates the spacing of histone octamers on the DNA template to facilitate access to DNA. Within the BRF-1 ISWI chromatin remodeling complex interacts with SMARCA1; the interaction is direct. Component of the BRF-5 ISWI chromatin remodeling complex, at least composed of SMARCA5/SNF2H and BAZ2B, which regulates the spacing of histone octamers on the DNA template to facilitate access to DNA. Within the BRF-5 ISWI chromatin remodeling complex interacts with SMARCA5/SNF2H; the interaction is direct. Interacts with acetylated lysine residues on histone H1.4, H2A, H2B, H3 and H4 (in vitro). Interacts with EHMT1. Expressed at varying levels in several tissues, whereas a smaller transcript was expressed specifically in testis.

It localises to the nucleus. Its function is as follows. Regulatory subunit of the ATP-dependent BRF-1 and BRF-5 ISWI chromatin remodeling complexes, which form ordered nucleosome arrays on chromatin and facilitate access to DNA during DNA-templated processes such as DNA replication, transcription, and repair. Both complexes regulate the spacing of nucleosomes along the chromatin and have the ability to slide mononucleosomes to the center of a DNA template. The BRF-1 ISWI chromatin remodeling complex has a lower ATP hydrolysis rate than the BRF-5 ISWI chromatin remodeling complex. Chromatin reader protein, which may play a role in transcriptional regulation via interaction with ISWI. Involved in positively modulating the rate of age-related behavioral deterioration. Represses the expression of mitochondrial function-related genes, perhaps by occupying their promoter regions, working in concert with histone methyltransferase EHMT1. In Homo sapiens (Human), this protein is Bromodomain adjacent to zinc finger domain protein 2B (BAZ2B).